The sequence spans 86 residues: Putative membrane protein insertion efficiency factor (86 aa).

It belongs to the UPF0161 family.

The protein resides in the cell inner membrane. In terms of biological role, could be involved in insertion of integral membrane proteins into the membrane. In Ruegeria sp. (strain TM1040) (Silicibacter sp.), this protein is Putative membrane protein insertion efficiency factor.